A 290-amino-acid polypeptide reads, in one-letter code: Chitinase 10 (290 aa).

The N-terminal stretch at 1–28 is a signal peptide; that stretch reads MAKPTPAPRATPFLLAAVLSIVVVAASG. 2 cysteine pairs are disulfide-bonded: C70–C132 and C144–C153. The Proton donor role is filled by E114. Residues N193 and N234 are each glycosylated (N-linked (GlcNAc...) asparagine). C252 and C284 are disulfide-bonded.

This sequence belongs to the glycosyl hydrolase 19 family. Chitinase class I subfamily. As to expression, expressed at low levels in roots, leaves and meristems.

The enzyme catalyses Random endo-hydrolysis of N-acetyl-beta-D-glucosaminide (1-&gt;4)-beta-linkages in chitin and chitodextrins.. The polypeptide is Chitinase 10 (Cht10) (Oryza sativa subsp. japonica (Rice)).